A 227-amino-acid chain; its full sequence is MGGKLSKKKKGYNVNDEKAKEKDKKAEGAATEEEGTPKESEPQAAAEPAEAKEGKEKPDQDAEGKAEEKEGEKDAAAAKEEAPKAEPEKTEGAAEAKAEPPKAPEQEQAAPGPAAGGEAPKAAEAAAAPAESAAPAAGEEPSKEEGEPKKTEAPAAPAAQETKSDGAPASDSKPGSSEAAPSSKETPAATEAPSSTPKAQGPAASAEEPKPVEAPAANSDQTVTVKE.

The span at 1–11 (MGGKLSKKKKG) shows a compositional bias: basic residues. Residues 1–227 (MGGKLSKKKK…NSDQTVTVKE (227 aa)) are disordered. G2 carries the N-myristoyl glycine lipid modification. Basic and acidic residues predominate over residues 15 to 27 (NDEKAKEKDKKAE). K25 participates in a covalent cross-link: Glycyl lysine isopeptide (Lys-Gly) (interchain with G-Cter in SUMO2). A phosphothreonine mark is found at T31 and T36. S40 carries the phosphoserine modification. Basic and acidic residues predominate over residues 49-105 (AEAKEGKEKPDQDAEGKAEEKEGEKDAAAAKEEAPKAEPEKTEGAAEAKAEPPKAPE). Glycyl lysine isopeptide (Lys-Gly) (interchain with G-Cter in SUMO2) cross-links involve residues K84 and K97. Residues 106–139 (QEQAAPGPAAGGEAPKAAEAAAAPAESAAPAAGE) show a composition bias toward low complexity. Residues 140 to 152 (EPSKEEGEPKKTE) show a composition bias toward basic and acidic residues. A Glycyl lysine isopeptide (Lys-Gly) (interchain with G-Cter in SUMO2) cross-link involves residue K163. Phosphoserine occurs at positions 164, 170, 172, 176, and 195. The segment covering 173–185 (KPGSSEAAPSSKE) has biased composition (polar residues). At T196 the chain carries Phosphothreonine. Residues S205 and S219 each carry the phosphoserine modification. The segment covering 218 to 227 (NSDQTVTVKE) has biased composition (polar residues).

Brain.

The protein resides in the cell membrane. Its subcellular location is the cell projection. It localises to the growth cone. The polypeptide is Brain acid soluble protein 1 (BASP1) (Homo sapiens (Human)).